The sequence spans 190 residues: A-type ATP synthase subunit E (190 aa).

The protein belongs to the V-ATPase E subunit family. Has multiple subunits with at least A(3), B(3), C, D, E, F, H, I and proteolipid K(x).

It localises to the cell membrane. Component of the A-type ATP synthase that produces ATP from ADP in the presence of a proton gradient across the membrane. The sequence is that of A-type ATP synthase subunit E from Pyrobaculum islandicum (strain DSM 4184 / JCM 9189 / GEO3).